The chain runs to 142 residues: MRNYDLSPLLRQWIGFDKLANALQNTGESQSFPPYNIEKSDDNHYRITLALAGFRQEDLDIQLEGTRLTVKGTPAQPEKEIKWLHQGLVTQPFSLSFTLAENMEVSGATFTNGLLHIDLTRNEPETIAPQRIAISERPALNS.

The sHSP domain occupies 26 to 137 (TGESQSFPPY…APQRIAISER (112 aa)).

This sequence belongs to the small heat shock protein (HSP20) family. Homodimer. Forms homomultimers of about 100-150 subunits at optimal growth temperatures. Conformation changes to oligomers at high temperatures or high ionic concentrations. The decrease in size of the multimers is accompanied by an increase in chaperone activity.

It is found in the cytoplasm. Associates with aggregated proteins, together with IbpA, to stabilize and protect them from irreversible denaturation and extensive proteolysis during heat shock and oxidative stress. Aggregated proteins bound to the IbpAB complex are more efficiently refolded and reactivated by the ATP-dependent chaperone systems ClpB and DnaK/DnaJ/GrpE. Its activity is ATP-independent. The polypeptide is Small heat shock protein IbpB (Citrobacter koseri (strain ATCC BAA-895 / CDC 4225-83 / SGSC4696)).